The chain runs to 83 residues: Mitochondrial import inner membrane translocase subunit Tim8 B (83 aa).

Position 2 is an N-acetylalanine (Ala2). The Twin CX3C motif motif lies at 36-59 (CWDKCVEKPGNRLDSRTENCLSSC). Intrachain disulfides connect Cys36–Cys59 and Cys40–Cys55.

It belongs to the small Tim family. In terms of assembly, heterohexamer; possibly composed of 3 copies of TIMM8B and 3 copies of TIMM13, named soluble 70 kDa complex. Associates with the TIM22 complex, whose core is composed of TIMM22. In terms of tissue distribution, ubiquitous, with highest expression in heart, kidney, liver and skeletal muscle.

The protein localises to the mitochondrion inner membrane. Functionally, probable mitochondrial intermembrane chaperone that participates in the import and insertion of some multi-pass transmembrane proteins into the mitochondrial inner membrane. Also required for the transfer of beta-barrel precursors from the TOM complex to the sorting and assembly machinery (SAM complex) of the outer membrane. Acts as a chaperone-like protein that protects the hydrophobic precursors from aggregation and guide them through the mitochondrial intermembrane space. In Homo sapiens (Human), this protein is Mitochondrial import inner membrane translocase subunit Tim8 B (TIMM8B).